The sequence spans 182 residues: Protein Syd (182 aa).

This sequence belongs to the Syd family.

It localises to the cell inner membrane. Interacts with the SecY protein in vivo. May bind preferentially to an uncomplexed state of SecY, thus functioning either as a chelating agent for excess SecY in the cell or as a regulatory factor that negatively controls the translocase function. The sequence is that of Protein Syd from Pectobacterium carotovorum subsp. carotovorum (strain PC1).